Here is a 107-residue protein sequence, read N- to C-terminus: Nucleoid-associated protein A1I_00660 (107 aa).

Residues 81–107 (KCDSDSQNSMSGALSGMSLPPGFKMPF) form a disordered region.

It belongs to the YbaB/EbfC family. Homodimer.

It localises to the cytoplasm. Its subcellular location is the nucleoid. Functionally, binds to DNA and alters its conformation. May be involved in regulation of gene expression, nucleoid organization and DNA protection. The polypeptide is Nucleoid-associated protein A1I_00660 (Rickettsia bellii (strain OSU 85-389)).